Reading from the N-terminus, the 197-residue chain is Putative manganese efflux pump MntP (197 aa).

The next 6 membrane-spanning stretches (helical) occupy residues 8–28, 43–63, 66–86, 123–143, 146–166, and 177–197; these read VILLAIALAMDAFAVSIGLGA, VYAALYFGIAQGVMPLIGYLL, VLLGWLATAAPWIGGGILIVL, LAIATSIDAMAAGFTLNLLAL, WLACLIIAIVTAGFGFFGIYL, and KAEILGGLVLIAIGVKVMLFS.

Belongs to the MntP (TC 9.B.29) family.

It is found in the cell inner membrane. Its function is as follows. Probably functions as a manganese efflux pump. The chain is Putative manganese efflux pump MntP from Psychrobacter arcticus (strain DSM 17307 / VKM B-2377 / 273-4).